The sequence spans 102 residues: NADH-quinone oxidoreductase subunit K (102 aa).

3 consecutive transmembrane segments (helical) span residues isoleucine 5–leucine 25, isoleucine 31–phenylalanine 51, and phenylalanine 66–phenylalanine 86.

Belongs to the complex I subunit 4L family. As to quaternary structure, NDH-1 is composed of 14 different subunits. Subunits NuoA, H, J, K, L, M, N constitute the membrane sector of the complex.

The protein localises to the cell inner membrane. The catalysed reaction is a quinone + NADH + 5 H(+)(in) = a quinol + NAD(+) + 4 H(+)(out). In terms of biological role, NDH-1 shuttles electrons from NADH, via FMN and iron-sulfur (Fe-S) centers, to quinones in the respiratory chain. The immediate electron acceptor for the enzyme in this species is believed to be ubiquinone. Couples the redox reaction to proton translocation (for every two electrons transferred, four hydrogen ions are translocated across the cytoplasmic membrane), and thus conserves the redox energy in a proton gradient. The polypeptide is NADH-quinone oxidoreductase subunit K (Bartonella grahamii (strain as4aup)).